The chain runs to 424 residues: Chloroquine resistance transporter (424 aa).

Residues 1–58 (MKFASKKNNQKNSSKNDERYRELDNLVQEGNGSRLGGGSCLGKCAHVFKLIFKEIKDN) lie on the Cytoplasmic side of the membrane. The helical transmembrane segment at 59 to 79 (IFIYILSIIYLSVCVMNKIFA) threads the bilayer. Topologically, residues 80–90 (KRTLNKIGNYS) are vacuolar. N-linked (GlcNAc...) asparagine glycosylation is present at N88. Residues 91 to 111 (FVTSETHNFICMIMFFIVYSL) traverse the membrane as a helical segment. At 112–127 (FGNKKGNSKERHRSFN) the chain is on the cytoplasmic side. Residues 128–148 (LQFFAISMLDACSVILAFIGL) form a helical membrane-spanning segment. Residues 149-154 (TRTTGN) are Vacuolar-facing. The helical transmembrane segment at 155 to 175 (IQSFVLQLSIPINMFFCFLIL) threads the bilayer. Over 176–178 (RYR) the chain is Cytoplasmic. A helical transmembrane segment spans residues 179-199 (YHLYNYLGAVIIVVTIALVEM). Residues 200–209 (KLSFETQEEN) are Vacuolar-facing. Residues 210-230 (SIIFNLVLISALIPVCFSNMT) traverse the membrane as a helical segment. Over 231-248 (REIVFKKYKIDILRLNAM) the chain is Cytoplasmic. A helical membrane pass occupies residues 249–269 (VSFFQLFTSCLILPVYTLPFL). Topologically, residues 270–317 (KQLHLPYNEIWTNIKNGFACLFLGRNTVVENCGLGMAKLCDDCDGAWK) are vacuolar. 2 disulfides stabilise this stretch: C289-C312 and C301-C309. Residues 318–338 (TFALFSFFNICDNLITSYIID) form a helical membrane-spanning segment. The Cytoplasmic portion of the chain corresponds to 339–346 (KFSTMTYT). The helical transmembrane segment at 347–367 (IVSCIQGPAIAIAYYFKFLAG) threads the bilayer. The Vacuolar portion of the chain corresponds to 368–377 (DVVREPRLLD). The helical transmembrane segment at 378–398 (FVTLFGYLFGSIIYRVGNIIL) threads the bilayer. Topologically, residues 399-424 (ERKKMRNEENEDSEGELTNVDSIITQ) are cytoplasmic.

The protein belongs to the CRT-like transporter family. As to quaternary structure, monomer.

Its subcellular location is the vacuole membrane. The catalysed reaction is L-arginine(in) = L-arginine(out). It carries out the reaction L-lysine(in) = L-lysine(out). The enzyme catalyses L-histidine(out) = L-histidine(in). It catalyses the reaction histamine(out) = histamine(in). The catalysed reaction is spermidine(in) = spermidine(out). It carries out the reaction Fe(3+)(in) = Fe(3+)(out). The enzyme catalyses Fe(2+)(in) = Fe(2+)(out). Its activity is regulated as follows. Transporter activity is trans-stimulated by host-derived peptides containing 4-11 amino acids. Trans-stimulation by hemoglobin-derived peptide VDPVNF is pH-dependent and sodium-independent. Saquinavir trans-stimulates transport of hemoglobin-derived peptide VDPVNF. Protons are non-competitive inhibitors of chloroquine transport. Functionally, nutrient transporter. Substrate transport is pH-dependent. Can transport arginine, lysine, histidine, peptides, histamine and spermidine. May modulate activity of endogenous transporters. Involved in maintaining the osmotic homeostasis of the digestive vacuole. Required for the asexual intraerythrocytic proliferation of parasites. Can transport Fe(2+) and Fe(3+). The protein is Chloroquine resistance transporter of Plasmodium falciparum.